An 843-amino-acid chain; its full sequence is Glycogen phosphorylase, brain form (843 aa).

An N-acetylalanine modification is found at alanine 2. At serine 15 the chain carries Phosphoserine; by PHK; in form phosphorylase A. Aspartate 43, tyrosine 197, and arginine 310 together coordinate AMP. Tyrosine 197 carries the phosphotyrosine modification. A Phosphotyrosine modification is found at tyrosine 473. Serine 524 is modified (phosphoserine). A pyridoxal 5'-phosphate-binding site is contributed by lysine 569. The pyridoxal 5'-phosphate stretch occupies residues 677–678; that stretch reads TG. N6-(pyridoxal phosphate)lysine is present on lysine 681.

The protein belongs to the glycogen phosphorylase family. Homodimer. Dimers associate into a tetramer to form the enzymatically active phosphorylase A. Requires pyridoxal 5'-phosphate as cofactor. Post-translationally, phosphorylation of Ser-15 converts phosphorylase B (unphosphorylated) to phosphorylase A.

The catalysed reaction is [(1-&gt;4)-alpha-D-glucosyl](n) + phosphate = [(1-&gt;4)-alpha-D-glucosyl](n-1) + alpha-D-glucose 1-phosphate. Activity of phosphorylase is controlled both by allosteric means (through the non-covalent binding of metabolites) and by covalent modification. Thus AMP allosterically activates, whereas ATP, ADP, and glucose-6-phosphate allosterically inhibit, phosphorylase B. Functionally, glycogen phosphorylase that regulates glycogen mobilization. Phosphorylase is an important allosteric enzyme in carbohydrate metabolism. Enzymes from different sources differ in their regulatory mechanisms and in their natural substrates. However, all known phosphorylases share catalytic and structural properties. The chain is Glycogen phosphorylase, brain form (Pygb) from Mus musculus (Mouse).